The primary structure comprises 115 residues: Delta-hexatoxin-Hi1a (115 aa).

The first 18 residues, Met-1–Gly-18, serve as a signal peptide directing secretion. Residues Asp-19–Arg-73 constitute a propeptide that is removed on maturation. 4 cysteine pairs are disulfide-bonded: Cys-74–Cys-88, Cys-81–Cys-93, Cys-87–Cys-104, and Cys-89–Cys-115.

Belongs to the neurotoxin 06 (delta-actx) family. Expressed by the venom gland.

The protein resides in the secreted. Neurotoxin that slows inactivation of voltage-gated sodium channels (Nav). In vivo, is lethal to both vertebrates and insects. This Hadronyche infensa (Fraser island funnel-web spider) protein is Delta-hexatoxin-Hi1a.